Consider the following 386-residue polypeptide: MKIHEYQGKEILRNFGVPVPRGIPAFTVQEAVEAAQKLGGPVWVVKAQIHAGGRGKGGGVKVAKTIEDVKRIAGEILGMQLKTHQTGPEGQKVRRLYIEDGADIQKEYYVSLVTDRATQKVAFIASSEGGMDIEEVAHSTPEKIITEFIDPLTGLGEEQAVKIANGIGLPPESTAQAVDIFQKLYKCYMDTDASLVEINPLNRDSKNALMALDAKFNFDPNALFRHADIVAYRDLDEEDPAEVEASKFDLAYISLDGNIGCLVNGAGLAMATMDTIKLFGGEPANFLDVGGGATAEKVTEAFKIMLKNPDVKGILVNIFGGIMKCDTIADGVIAACKAVNLSVPLVVRMKGTNEDLGKKMLAESGLPIIAADTMAEAATKIVAAVK.

The region spanning lysine 9–glutamate 244 is the ATP-grasp domain. ATP is bound by residues lysine 46, glycine 53 to glycine 55, glutamate 99, alanine 102, and glutamate 107. Positions 199 and 213 each coordinate Mg(2+). Residues asparagine 264 and glycine 321–methionine 323 each bind substrate.

This sequence belongs to the succinate/malate CoA ligase beta subunit family. As to quaternary structure, heterotetramer of two alpha and two beta subunits. Mg(2+) serves as cofactor.

It catalyses the reaction succinate + ATP + CoA = succinyl-CoA + ADP + phosphate. The enzyme catalyses GTP + succinate + CoA = succinyl-CoA + GDP + phosphate. It participates in carbohydrate metabolism; tricarboxylic acid cycle; succinate from succinyl-CoA (ligase route): step 1/1. In terms of biological role, succinyl-CoA synthetase functions in the citric acid cycle (TCA), coupling the hydrolysis of succinyl-CoA to the synthesis of either ATP or GTP and thus represents the only step of substrate-level phosphorylation in the TCA. The beta subunit provides nucleotide specificity of the enzyme and binds the substrate succinate, while the binding sites for coenzyme A and phosphate are found in the alpha subunit. In Polaromonas naphthalenivorans (strain CJ2), this protein is Succinate--CoA ligase [ADP-forming] subunit beta.